The following is a 352-amino-acid chain: Lipoyl synthase (352 aa).

The tract at residues 1–21 is disordered; sequence MTSVDTPTPHGGTPAPAPATA. [4Fe-4S] cluster contacts are provided by C71, C76, C82, C97, C101, C104, and S308. A Radical SAM core domain is found at 83–297; the sequence is WEDREATFLI…SRVAEEIGFA (215 aa).

Belongs to the radical SAM superfamily. Lipoyl synthase family. The cofactor is [4Fe-4S] cluster.

Its subcellular location is the cytoplasm. The enzyme catalyses [[Fe-S] cluster scaffold protein carrying a second [4Fe-4S](2+) cluster] + N(6)-octanoyl-L-lysyl-[protein] + 2 oxidized [2Fe-2S]-[ferredoxin] + 2 S-adenosyl-L-methionine + 4 H(+) = [[Fe-S] cluster scaffold protein] + N(6)-[(R)-dihydrolipoyl]-L-lysyl-[protein] + 4 Fe(3+) + 2 hydrogen sulfide + 2 5'-deoxyadenosine + 2 L-methionine + 2 reduced [2Fe-2S]-[ferredoxin]. It participates in protein modification; protein lipoylation via endogenous pathway; protein N(6)-(lipoyl)lysine from octanoyl-[acyl-carrier-protein]: step 2/2. Functionally, catalyzes the radical-mediated insertion of two sulfur atoms into the C-6 and C-8 positions of the octanoyl moiety bound to the lipoyl domains of lipoate-dependent enzymes, thereby converting the octanoylated domains into lipoylated derivatives. This Nocardia farcinica (strain IFM 10152) protein is Lipoyl synthase.